Here is a 431-residue protein sequence, read N- to C-terminus: LWRGVLTTIEVSWRPTVDPERFRPHPTSPPHRPAHTPQPGGVRGADPGWAADGGRGVGDHAQGQQAATVRAEFFWGAAGEGSVTGQANAQDKADREPAARPRDPRSRLAAGPSRGGRGAQPEPPRGSRRETRKPSRSTPLPELLTGPPAPNLPGPIAVEPGRRPSPPPSTRPTYRRRRPTAATPSRKKKARRGPKASKAGREGELGGGSPVAHRGTSLGTGVRDPAPRGGRGRARTPGPVHSAAGGPGSRRRSPGAARDPGPEPGEERGGGGKPPLGSPRATDGNRDPGAGVPARPGRRMGGSSGGRGGTPGRGPERAAPGARPTAPDGAPGRWDGPADGPAPGLGRGGWGVGREAGGSGRSVRTAARPEPCRGLRRGAAGTPGFIGFQMPRLGGRSGNFPPPRPMPGTGLALPRCGRPVEKYRRMRTAHI.

Disordered regions lie at residues 17-66 and 81-415; these read VDPE…GQQA and GSVT…ALPR. Residues 91–106 are compositionally biased toward basic and acidic residues; sequence DKADREPAARPRDPRS. The segment covering 173-195 has biased composition (basic residues); sequence TYRRRRPTAATPSRKKKARRGPK. The segment covering 235–244 has biased composition (low complexity); sequence RTPGPVHSAA. The segment covering 299 to 312 has biased composition (gly residues); sequence RMGGSSGGRGGTPG. A compositionally biased stretch (low complexity) spans 317-342; sequence RAAPGARPTAPDGAPGRWDGPADGPA. Over residues 343-360 the composition is skewed to gly residues; sequence PGLGRGGWGVGREAGGSG.

This is an uncharacterized protein from Homo sapiens (Human).